The sequence spans 514 residues: ATP synthase subunit alpha (514 aa).

170-177 contributes to the ATP binding site; sequence GDRQTGKT.

Belongs to the ATPase alpha/beta chains family. In terms of assembly, F-type ATPases have 2 components, CF(1) - the catalytic core - and CF(0) - the membrane proton channel. CF(1) has five subunits: alpha(3), beta(3), gamma(1), delta(1), epsilon(1). CF(0) has three main subunits: a(1), b(2) and c(9-12). The alpha and beta chains form an alternating ring which encloses part of the gamma chain. CF(1) is attached to CF(0) by a central stalk formed by the gamma and epsilon chains, while a peripheral stalk is formed by the delta and b chains.

It localises to the cell inner membrane. It carries out the reaction ATP + H2O + 4 H(+)(in) = ADP + phosphate + 5 H(+)(out). In terms of biological role, produces ATP from ADP in the presence of a proton gradient across the membrane. The alpha chain is a regulatory subunit. The protein is ATP synthase subunit alpha of Acidithiobacillus ferrooxidans (strain ATCC 23270 / DSM 14882 / CIP 104768 / NCIMB 8455) (Ferrobacillus ferrooxidans (strain ATCC 23270)).